Here is a 103-residue protein sequence, read N- to C-terminus: Glutaredoxin-C1 (103 aa).

Positions methionine 1 to tryptophan 102 constitute a Glutaredoxin domain. Cysteines 21 and 24 form a disulfide.

Belongs to the glutaredoxin family. CC-type subfamily.

Its subcellular location is the cytoplasm. In terms of biological role, has a glutathione-disulfide oxidoreductase activity in the presence of NADPH and glutathione reductase. Reduces low molecular weight disulfides and proteins. The sequence is that of Glutaredoxin-C1 (GRXC1) from Oryza sativa subsp. japonica (Rice).